The following is a 417-amino-acid chain: Probable serine/threonine-protein kinase WNK9 (417 aa).

A disordered region spans residues Met-1–Val-23. A Protein kinase domain is found at Ile-32–Leu-289. ATP-binding positions include Thr-113–Phe-116 and Lys-163. Asp-180 serves as the catalytic Proton acceptor.

Belongs to the protein kinase superfamily. Ser/Thr protein kinase family. WNK subfamily.

The catalysed reaction is L-seryl-[protein] + ATP = O-phospho-L-seryl-[protein] + ADP + H(+). It carries out the reaction L-threonyl-[protein] + ATP = O-phospho-L-threonyl-[protein] + ADP + H(+). This chain is Probable serine/threonine-protein kinase WNK9 (WNK9), found in Oryza sativa subsp. japonica (Rice).